The chain runs to 865 residues: Alanine--tRNA ligase (865 aa).

4 residues coordinate Zn(2+): His-554, His-558, Cys-656, and His-660.

Belongs to the class-II aminoacyl-tRNA synthetase family. Zn(2+) is required as a cofactor.

The protein resides in the cytoplasm. The catalysed reaction is tRNA(Ala) + L-alanine + ATP = L-alanyl-tRNA(Ala) + AMP + diphosphate. In terms of biological role, catalyzes the attachment of alanine to tRNA(Ala) in a two-step reaction: alanine is first activated by ATP to form Ala-AMP and then transferred to the acceptor end of tRNA(Ala). Also edits incorrectly charged Ser-tRNA(Ala) and Gly-tRNA(Ala) via its editing domain. The chain is Alanine--tRNA ligase from Francisella tularensis subsp. holarctica (strain LVS).